A 417-amino-acid chain; its full sequence is Zinc-finger homeodomain protein 4 (417 aa).

A compositionally biased stretch (polar residues) spans 1–12; it reads MVSILQLQTRTE. Disordered regions lie at residues 1-22 and 31-50; these read MVSI…ASAA and RQQQ…FQER. The span at 13–22 shows a compositional bias: low complexity; the sequence is ASPASSASAA. The span at 36 to 46 shows a compositional bias: acidic residues; that stretch reads QEGEEEEEEFE. The ZF-HD dimerization-type; degenerate zinc-finger motif lies at 145–194; it reads YRECLKNHAAAIGGNATDGCGEFMPSGEEGSLEALKCSACGCHRNFHRKE. Disordered stretches follow at residues 281 to 309 and 361 to 417; these read DEMD…FRTK and NLAK…LKLE. Positions 286–298 are enriched in gly residues; that stretch reads SGGGGGVGRGGGS. The homeobox DNA-binding region spans 303–366; sequence KKRFRTKFTA…NNKHNLAKKP (64 aa). Residues 368–417 are compositionally biased toward pro residues; sequence PSSPPPPPQIPPMSMPPSPPPPQIPPMSMPPSPPPMPMPMPPSPPQLKLE.

Homo- and heterodimer with other ZFHD proteins.

Its subcellular location is the nucleus. Its function is as follows. Putative transcription factor. The protein is Zinc-finger homeodomain protein 4 (ZHD4) of Oryza sativa subsp. japonica (Rice).